The following is a 283-amino-acid chain: Thymidylate synthase (283 aa).

Arg-22 is a dUMP binding site. Cys-160 functions as the Nucleophile in the catalytic mechanism. DUMP-binding positions include Arg-180 to Asp-183, Asn-191, and His-221 to Tyr-223. (6R)-5,10-methylene-5,6,7,8-tetrahydrofolate is bound at residue Asp-183. Ser-282 is a (6R)-5,10-methylene-5,6,7,8-tetrahydrofolate binding site.

Belongs to the thymidylate synthase family. Bacterial-type ThyA subfamily. Homodimer.

It localises to the cytoplasm. It carries out the reaction dUMP + (6R)-5,10-methylene-5,6,7,8-tetrahydrofolate = 7,8-dihydrofolate + dTMP. The protein operates within pyrimidine metabolism; dTTP biosynthesis. In terms of biological role, catalyzes the reductive methylation of 2'-deoxyuridine-5'-monophosphate (dUMP) to 2'-deoxythymidine-5'-monophosphate (dTMP) while utilizing 5,10-methylenetetrahydrofolate (mTHF) as the methyl donor and reductant in the reaction, yielding dihydrofolate (DHF) as a by-product. This enzymatic reaction provides an intracellular de novo source of dTMP, an essential precursor for DNA biosynthesis. The chain is Thymidylate synthase from Vibrio parahaemolyticus serotype O3:K6 (strain RIMD 2210633).